Here is a 593-residue protein sequence, read N- to C-terminus: DNA topoisomerase I, mitochondrial (593 aa).

A mitochondrion-targeting transit peptide spans 1–43; the sequence is MLLLWLRALCRRFQHVPRRVPSRQVSRGSKASRAGWGETSKSS. 3 interaction with DNA regions span residues 254–255, 317–322, and 414–416; these read KY, RTGNEK, and TAK. The Topo IB-type catalytic domain occupies 261–593; the sequence is SSKPKGEMDW…FNQAGEDFEF (333 aa). The O-(3'-phospho-DNA)-tyrosine intermediate role is filled by Y551.

This sequence belongs to the type IB topoisomerase family. Ca(2+) is required as a cofactor. Mg(2+) serves as cofactor.

Its subcellular location is the mitochondrion. It carries out the reaction ATP-independent breakage of single-stranded DNA, followed by passage and rejoining.. In terms of biological role, releases the supercoiling and torsional tension of DNA introduced during duplication of mitochondrial DNA by transiently cleaving and rejoining one strand of the DNA duplex. Introduces a single-strand break via transesterification at a target site in duplex DNA. The scissile phosphodiester is attacked by the catalytic tyrosine of the enzyme, resulting in the formation of a DNA-(3'-phosphotyrosyl)-enzyme intermediate and the expulsion of a 5'-OH DNA strand. The free DNA strand then rotates around the intact phosphodiester bond on the opposing strand, thus removing DNA supercoils. Finally, in the religation step, the DNA 5'-OH attacks the covalent intermediate to expel the active-site tyrosine and restore the DNA phosphodiester backbone. This chain is DNA topoisomerase I, mitochondrial (Top1mt), found in Rattus norvegicus (Rat).